The following is a 545-amino-acid chain: Chaperonin GroEL (545 aa).

Residues 30-33, Lys51, 87-91, Gly415, and Asp494 each bind ATP; these read TMGP and DGTTT.

It belongs to the chaperonin (HSP60) family. Forms a cylinder of 14 subunits composed of two heptameric rings stacked back-to-back. Interacts with the co-chaperonin GroES.

Its subcellular location is the cytoplasm. The enzyme catalyses ATP + H2O + a folded polypeptide = ADP + phosphate + an unfolded polypeptide.. In terms of biological role, together with its co-chaperonin GroES, plays an essential role in assisting protein folding. The GroEL-GroES system forms a nano-cage that allows encapsulation of the non-native substrate proteins and provides a physical environment optimized to promote and accelerate protein folding. The protein is Chaperonin GroEL of Helicobacter hepaticus (strain ATCC 51449 / 3B1).